Here is an 84-residue protein sequence, read N- to C-terminus: Protein myomixer (84 aa).

The Cytoplasmic segment spans residues 1-4 (MPTP). Residues 5-25 (LLPLLLRLLLSCLLLPAARLA) traverse the membrane as a helical segment. The Extracellular portion of the chain corresponds to 26–84 (RQYLLPLLRRLARRLGSQDMREALLGCLLFILSQRHSPDAGEASRVDRLERRERLGPQK). The AxLyCxL signature appears at 48–57 (ALLGCLLFIL). A disordered region spans residues 62–84 (SPDAGEASRVDRLERRERLGPQK).

The protein belongs to the MYMX family. In terms of assembly, interacts with MYMK.

The protein localises to the cell membrane. Its function is as follows. Myoblast-specific protein that mediates myoblast fusion, an essential step for the formation of multi-nucleated muscle fibers. Involved in membrane fusion downstream of the lipid mixing step mediated by MYMK. Acts by generating membrane stresses via its extracellular C-terminus, leading to drive fusion pore formation. Acts independently of MYMK. Involved in skeletal muscle regeneration in response to injury by mediating the fusion of satellite cells, a population of muscle stem cells, with injured myofibers. In Homo sapiens (Human), this protein is Protein myomixer.